Here is a 354-residue protein sequence, read N- to C-terminus: Homoserine O-succinyltransferase (354 aa).

Cys146 (acyl-thioester intermediate) is an active-site residue. Residues Lys167 and Ser196 each coordinate substrate. The Proton acceptor role is filled by His239. Glu241 is an active-site residue. Arg253 is a substrate binding site.

This sequence belongs to the MetA family.

The protein localises to the cytoplasm. The enzyme catalyses L-homoserine + succinyl-CoA = O-succinyl-L-homoserine + CoA. The protein operates within amino-acid biosynthesis; L-methionine biosynthesis via de novo pathway; O-succinyl-L-homoserine from L-homoserine: step 1/1. Transfers a succinyl group from succinyl-CoA to L-homoserine, forming succinyl-L-homoserine. This Methylobacter tundripaludum (strain ATCC BAA-1195 / DSM 17260 / SV96) protein is Homoserine O-succinyltransferase.